Reading from the N-terminus, the 101-residue chain is NAD(P)H-quinone oxidoreductase subunit 4L, chloroplastic (101 aa).

Transmembrane regions (helical) follow at residues 2–22 (ILEH…YGLI), 32–52 (MCLE…SDFF), and 61–81 (IFSI…LAIV).

It belongs to the complex I subunit 4L family. As to quaternary structure, NDH is composed of at least 16 different subunits, 5 of which are encoded in the nucleus.

It is found in the plastid. Its subcellular location is the chloroplast thylakoid membrane. The enzyme catalyses a plastoquinone + NADH + (n+1) H(+)(in) = a plastoquinol + NAD(+) + n H(+)(out). It catalyses the reaction a plastoquinone + NADPH + (n+1) H(+)(in) = a plastoquinol + NADP(+) + n H(+)(out). In terms of biological role, NDH shuttles electrons from NAD(P)H:plastoquinone, via FMN and iron-sulfur (Fe-S) centers, to quinones in the photosynthetic chain and possibly in a chloroplast respiratory chain. The immediate electron acceptor for the enzyme in this species is believed to be plastoquinone. Couples the redox reaction to proton translocation, and thus conserves the redox energy in a proton gradient. This Nicotiana sylvestris (Wood tobacco) protein is NAD(P)H-quinone oxidoreductase subunit 4L, chloroplastic.